The sequence spans 449 residues: Trigger factor (449 aa).

Positions 173–258 (GDRVTVDFVG…LKKVEWPHLP (86 aa)) constitute a PPIase FKBP-type domain.

This sequence belongs to the FKBP-type PPIase family. Tig subfamily.

It is found in the cytoplasm. It catalyses the reaction [protein]-peptidylproline (omega=180) = [protein]-peptidylproline (omega=0). Functionally, involved in protein export. Acts as a chaperone by maintaining the newly synthesized protein in an open conformation. Functions as a peptidyl-prolyl cis-trans isomerase. This is Trigger factor from Burkholderia pseudomallei (strain 1710b).